A 249-amino-acid chain; its full sequence is Dof zinc finger protein DOF4.5 (249 aa).

The Dof-type zinc-finger motif lies at 25–79 (RVCARCDSDNTKFCYYNNYCEFQPRYFCKNCRRYWTHGGALRNIPIGGSSRAKRA). Zn(2+) is bound by residues C27, C30, C52, and C55.

The protein resides in the nucleus. In terms of biological role, transcription factor that binds specifically to a 5'-AA[AG]G-3' consensus core sequence. This is Dof zinc finger protein DOF4.5 (DOF4.5) from Arabidopsis thaliana (Mouse-ear cress).